Here is a 274-residue protein sequence, read N- to C-terminus: Putative pyruvate, phosphate dikinase regulatory protein 1 (274 aa).

149-156 provides a ligand contact to ADP; the sequence is GISRTSKT.

It belongs to the pyruvate, phosphate/water dikinase regulatory protein family. PDRP subfamily.

It carries out the reaction N(tele)-phospho-L-histidyl/L-threonyl-[pyruvate, phosphate dikinase] + ADP = N(tele)-phospho-L-histidyl/O-phospho-L-threonyl-[pyruvate, phosphate dikinase] + AMP + H(+). It catalyses the reaction N(tele)-phospho-L-histidyl/O-phospho-L-threonyl-[pyruvate, phosphate dikinase] + phosphate + H(+) = N(tele)-phospho-L-histidyl/L-threonyl-[pyruvate, phosphate dikinase] + diphosphate. Its function is as follows. Bifunctional serine/threonine kinase and phosphorylase involved in the regulation of the pyruvate, phosphate dikinase (PPDK) by catalyzing its phosphorylation/dephosphorylation. In Listeria welshimeri serovar 6b (strain ATCC 35897 / DSM 20650 / CCUG 15529 / CIP 8149 / NCTC 11857 / SLCC 5334 / V8), this protein is Putative pyruvate, phosphate dikinase regulatory protein 1.